The chain runs to 250 residues: Ribosomal RNA small subunit methyltransferase J (250 aa).

S-adenosyl-L-methionine is bound by residues 96–97 and aspartate 168; that span reads RD.

This sequence belongs to the methyltransferase superfamily. RsmJ family.

Its subcellular location is the cytoplasm. It carries out the reaction guanosine(1516) in 16S rRNA + S-adenosyl-L-methionine = N(2)-methylguanosine(1516) in 16S rRNA + S-adenosyl-L-homocysteine + H(+). Specifically methylates the guanosine in position 1516 of 16S rRNA. In Neisseria meningitidis serogroup C (strain 053442), this protein is Ribosomal RNA small subunit methyltransferase J.